The chain runs to 536 residues: Glycine-rich extracellular protein 1 (536 aa).

Positions 1–22 (MGAWAFPAALFLLCLTSESLQG) are cleaved as a signal peptide. 3 disordered regions span residues 111–134 (AQNG…TTQN), 306–336 (GAGE…NGPW), and 500–536 (GDEY…LGKC). The segment covering 115–124 (FGPGFGGGGK) has biased composition (gly residues). The span at 521–536 (GQLGNGYGGRCPLGKC) shows a compositional bias: gly residues.

The sequence is that of Glycine-rich extracellular protein 1 from Homo sapiens (Human).